The chain runs to 68 residues: MNFNLRQAIMANIQGSNEQEVEATIVDAIQSGEEKMLPGLGVLFEVYWKNCNEQQKDQLCEQISQGLQ.

This sequence belongs to the SspI family.

Its subcellular location is the spore core. The protein is Small, acid-soluble spore protein I of Halalkalibacterium halodurans (strain ATCC BAA-125 / DSM 18197 / FERM 7344 / JCM 9153 / C-125) (Bacillus halodurans).